The following is a 494-amino-acid chain: Probable cytosol aminopeptidase (494 aa).

Mn(2+) contacts are provided by Lys-260 and Asp-265. Lys-272 is a catalytic residue. Positions 283, 342, and 344 each coordinate Mn(2+). Arg-346 is a catalytic residue.

It belongs to the peptidase M17 family. Mn(2+) is required as a cofactor.

It is found in the cytoplasm. It carries out the reaction Release of an N-terminal amino acid, Xaa-|-Yaa-, in which Xaa is preferably Leu, but may be other amino acids including Pro although not Arg or Lys, and Yaa may be Pro. Amino acid amides and methyl esters are also readily hydrolyzed, but rates on arylamides are exceedingly low.. The catalysed reaction is Release of an N-terminal amino acid, preferentially leucine, but not glutamic or aspartic acids.. Its function is as follows. Presumably involved in the processing and regular turnover of intracellular proteins. Catalyzes the removal of unsubstituted N-terminal amino acids from various peptides. In Bacillus anthracis (strain CDC 684 / NRRL 3495), this protein is Probable cytosol aminopeptidase.